Here is a 974-residue protein sequence, read N- to C-terminus: Isoleucine--tRNA ligase (974 aa).

Positions 69–79 (PYANGALHMGH) match the 'HIGH' region motif. Glu585 is a binding site for L-isoleucyl-5'-AMP. The 'KMSKS' region signature appears at 626–630 (KMSKS). Residue Lys629 coordinates ATP. Residues Cys939, Cys942, Cys959, and Cys962 each coordinate Zn(2+).

This sequence belongs to the class-I aminoacyl-tRNA synthetase family. IleS type 1 subfamily. As to quaternary structure, monomer. It depends on Zn(2+) as a cofactor.

Its subcellular location is the cytoplasm. The catalysed reaction is tRNA(Ile) + L-isoleucine + ATP = L-isoleucyl-tRNA(Ile) + AMP + diphosphate. Functionally, catalyzes the attachment of isoleucine to tRNA(Ile). As IleRS can inadvertently accommodate and process structurally similar amino acids such as valine, to avoid such errors it has two additional distinct tRNA(Ile)-dependent editing activities. One activity is designated as 'pretransfer' editing and involves the hydrolysis of activated Val-AMP. The other activity is designated 'posttransfer' editing and involves deacylation of mischarged Val-tRNA(Ile). In Parasynechococcus marenigrum (strain WH8102), this protein is Isoleucine--tRNA ligase.